A 287-amino-acid chain; its full sequence is Syntaxin-11 (287 aa).

Residues 41-71 (LESLYRVIQDIQDENQLLLIDVRRLGRQNVR) are a coiled coil. Positions 204–266 (LNEIESRHRE…GEAKAQVRKA (63 aa)) constitute a t-SNARE coiled-coil homology domain.

It belongs to the syntaxin family. In terms of assembly, interacts with the SNARE proteins SNAP-23 and VAMP.

The protein resides in the membrane. It is found in the golgi apparatus. Its subcellular location is the trans-Golgi network membrane. Its function is as follows. SNARE that acts to regulate protein transport between late endosomes and the trans-Golgi network. In Mus musculus (Mouse), this protein is Syntaxin-11 (Stx11).